The primary structure comprises 144 residues: Small ribosomal subunit protein uS11 (144 aa).

The segment at 123–144 is disordered; the sequence is EDVTPVPTDSTRRKGSRRGRRL. Residues 135–144 show a composition bias toward basic residues; it reads RKGSRRGRRL.

This sequence belongs to the universal ribosomal protein uS11 family.

The sequence is that of Small ribosomal subunit protein uS11 (RPS14) from Trypanosoma brucei brucei.